The sequence spans 534 residues: uncharacterized protein (534 aa).

Disordered stretches follow at residues methionine 1–proline 150, arginine 252–proline 284, and tryptophan 383–proline 434. The span at serine 8–tryptophan 67 shows a compositional bias: basic and acidic residues. A compositionally biased stretch (polar residues) spans serine 102–threonine 113. Residues proline 130–serine 141 are compositionally biased toward pro residues. A compositionally biased stretch (basic and acidic residues) spans arginine 252–arginine 262. Low complexity predominate over residues asparagine 263–serine 272. A compositionally biased stretch (polar residues) spans asparagine 393–phenylalanine 408.

This is an uncharacterized protein from Schizosaccharomyces pombe (strain 972 / ATCC 24843) (Fission yeast).